A 200-amino-acid polypeptide reads, in one-letter code: Isochorismatase family protein 2A (200 aa).

Belongs to the isochorismatase family.

The sequence is that of Isochorismatase family protein 2A from Dictyostelium discoideum (Social amoeba).